A 315-amino-acid polypeptide reads, in one-letter code: Mycothiol acetyltransferase (315 aa).

2 consecutive N-acetyltransferase domains span residues 4-141 and 152-315; these read LDWR…RPLR and VVIR…GTDN. 1D-myo-inositol 2-(L-cysteinylamino)-2-deoxy-alpha-D-glucopyranoside is bound at residue Glu36. Residues 80–82 and 88–93 contribute to the acetyl-CoA site; these read LVV and RRGIGT. 3 residues coordinate 1D-myo-inositol 2-(L-cysteinylamino)-2-deoxy-alpha-D-glucopyranoside: Glu179, Lys224, and Glu234. Acetyl-CoA-binding positions include 238–240 and 245–251; these read LGV and QRRGLGQ. Tyr282 provides a ligand contact to 1D-myo-inositol 2-(L-cysteinylamino)-2-deoxy-alpha-D-glucopyranoside. 287–292 lines the acetyl-CoA pocket; sequence NVAAVR.

This sequence belongs to the acetyltransferase family. MshD subfamily. Monomer.

It carries out the reaction 1D-myo-inositol 2-(L-cysteinylamino)-2-deoxy-alpha-D-glucopyranoside + acetyl-CoA = mycothiol + CoA + H(+). Functionally, catalyzes the transfer of acetyl from acetyl-CoA to desacetylmycothiol (Cys-GlcN-Ins) to form mycothiol. The protein is Mycothiol acetyltransferase of Mycobacterium bovis (strain ATCC BAA-935 / AF2122/97).